The following is a 129-amino-acid chain: Large ribosomal subunit protein bL12c (129 aa).

This sequence belongs to the bacterial ribosomal protein bL12 family. In terms of assembly, homodimer. Part of the ribosomal stalk of the 50S ribosomal subunit. Forms a multimeric L10(L12)X complex, where L10 forms an elongated spine to which 2 to 4 L12 dimers bind in a sequential fashion. Binds GTP-bound translation factors.

It localises to the plastid. The protein localises to the chloroplast. In terms of biological role, forms part of the ribosomal stalk which helps the ribosome interact with GTP-bound translation factors. Is thus essential for accurate translation. This Pyropia yezoensis (Susabi-nori) protein is Large ribosomal subunit protein bL12c.